We begin with the raw amino-acid sequence, 171 residues long: Peptidyl-prolyl cis-trans isomerase (171 aa).

The PPIase cyclophilin-type domain occupies 7-170; it reads FFDLTIGGAP…KPVVIADCGQ (164 aa).

Belongs to the cyclophilin-type PPIase family. In terms of tissue distribution, expressed in leaves, floral buds, growing shoots and stamens at anthesis.

It is found in the cytoplasm. It carries out the reaction [protein]-peptidylproline (omega=180) = [protein]-peptidylproline (omega=0). Binds cyclosporin A (CsA). CsA mediates some of its effects via an inhibitory action on PPIase. Functionally, PPIases accelerate the folding of proteins. It catalyzes the cis-trans isomerization of proline imidic peptide bonds in oligopeptides. The polypeptide is Peptidyl-prolyl cis-trans isomerase (Solanum lycopersicum (Tomato)).